Reading from the N-terminus, the 252-residue chain is MFKVVICDDERIIREGLKQIIPWGDYHFNTIYTAKDGVEALSLIQQHQPELVITDIRMPRKNGVDLLNDIAHLDCNVIILSSYDDFEYMKAGIQHHVLDYLLKPVDHAQLEVILGRLVRTLLEQQSQNGRSLASCHDAFQPLLKVEYDDYYVNQIVDQIKQSYQTKVTVSDLIQHIDVSESYAMRTFKDHVGITIVDYLNRYRILQSLQLLDRHYKHYEIADKVGFSEYKMFSYHFKKYLQMSPSDYCKQAK.

Residues K3–V118 enclose the Response regulatory domain. At D55 the chain carries 4-aspartylphosphate. The HTH araC/xylS-type domain maps to N153 to Q250. 2 DNA-binding regions (H-T-H motif) span residues S170 to V191 and H217 to L240.

In terms of processing, phosphorylated by HptS.

The protein resides in the cytoplasm. In terms of biological role, member of the two-component regulatory system HptS/HptR that regulates genes involved in hexose phosphate transport system in response to changes in extracellular phosphate sources. Activates uhpT expression to facilitate glucose-6-phosphate/G6P utilization by directly binding to its promoter. Antagonizes CcpA-dependent transcription of a subset of CcpA-regulated genes involved in antibiotic susceptibility. This is Transcriptional regulatory protein HptR (hptR) from Staphylococcus aureus (strain NCTC 8325 / PS 47).